The following is an 82-amino-acid chain: Cytochrome b559 subunit alpha (82 aa).

Residues valine 21–tryptophan 35 form a helical membrane-spanning segment. A heme-binding site is contributed by histidine 23.

This sequence belongs to the PsbE/PsbF family. Heterodimer of an alpha subunit and a beta subunit. PSII is composed of 1 copy each of membrane proteins PsbA, PsbB, PsbC, PsbD, PsbE, PsbF, PsbH, PsbI, PsbJ, PsbK, PsbL, PsbM, PsbT, PsbX, PsbY, PsbZ, Psb30/Ycf12, at least 3 peripheral proteins of the oxygen-evolving complex and a large number of cofactors. It forms dimeric complexes. It depends on heme b as a cofactor.

Its subcellular location is the plastid. The protein localises to the chloroplast thylakoid membrane. This b-type cytochrome is tightly associated with the reaction center of photosystem II (PSII). PSII is a light-driven water:plastoquinone oxidoreductase that uses light energy to abstract electrons from H(2)O, generating O(2) and a proton gradient subsequently used for ATP formation. It consists of a core antenna complex that captures photons, and an electron transfer chain that converts photonic excitation into a charge separation. The protein is Cytochrome b559 subunit alpha of Chlamydomonas reinhardtii (Chlamydomonas smithii).